The primary structure comprises 156 residues: Ribosomal RNA large subunit methyltransferase H (156 aa).

Residues Leu-73, Gly-104, and Leu-123–Leu-128 each bind S-adenosyl-L-methionine.

Belongs to the RNA methyltransferase RlmH family. In terms of assembly, homodimer.

Its subcellular location is the cytoplasm. The catalysed reaction is pseudouridine(1915) in 23S rRNA + S-adenosyl-L-methionine = N(3)-methylpseudouridine(1915) in 23S rRNA + S-adenosyl-L-homocysteine + H(+). Its function is as follows. Specifically methylates the pseudouridine at position 1915 (m3Psi1915) in 23S rRNA. The protein is Ribosomal RNA large subunit methyltransferase H of Colwellia psychrerythraea (strain 34H / ATCC BAA-681) (Vibrio psychroerythus).